Consider the following 254-residue polypeptide: 5-oxoprolinase subunit A (254 aa).

Belongs to the LamB/PxpA family. In terms of assembly, forms a complex composed of PxpA, PxpB and PxpC.

The enzyme catalyses 5-oxo-L-proline + ATP + 2 H2O = L-glutamate + ADP + phosphate + H(+). Its function is as follows. Catalyzes the cleavage of 5-oxoproline to form L-glutamate coupled to the hydrolysis of ATP to ADP and inorganic phosphate. This chain is 5-oxoprolinase subunit A, found in Bacillus mycoides (strain KBAB4) (Bacillus weihenstephanensis).